The sequence spans 392 residues: Phosphoglycerate kinase (392 aa).

Substrate contacts are provided by residues 19 to 21 (DYN), arginine 34, 57 to 60 (HLGR), arginine 116, and arginine 149. Residues lysine 199, glutamate 321, and 347 to 350 (GGDS) each bind ATP.

It belongs to the phosphoglycerate kinase family. In terms of assembly, monomer.

The protein localises to the cytoplasm. It catalyses the reaction (2R)-3-phosphoglycerate + ATP = (2R)-3-phospho-glyceroyl phosphate + ADP. It functions in the pathway carbohydrate degradation; glycolysis; pyruvate from D-glyceraldehyde 3-phosphate: step 2/5. In Thermomicrobium roseum (strain ATCC 27502 / DSM 5159 / P-2), this protein is Phosphoglycerate kinase.